The sequence spans 365 residues: Serine protease 40 (365 aa).

A signal peptide spans 1–34 (MCGIRAKKSGLGGYGAGLLAALLGVSFLSQHAQT). N-linked (GlcNAc...) asparagine glycosylation occurs at Asn44. Positions 69–313 (IYGGQIAGAE…FDKWIKDNKK (245 aa)) constitute a Peptidase S1 domain. Cys94 and Cys110 are disulfide-bonded. Active-site charge relay system residues include His109 and Asp159. Intrachain disulfides connect Cys193–Cys270, Cys226–Cys249, and Cys260–Cys288. Ser264 functions as the Charge relay system in the catalytic mechanism. Residues 312–343 (KKSSSNSKPGESPHHPGSPENENPEGDNKNQG) form a disordered region.

This sequence belongs to the peptidase S1 family. As to expression, expressed in testis. More specifically, abundantly expressed in the haploid round spermatid.

The protein resides in the cytoplasmic vesicle. It localises to the secretory vesicle. It is found in the acrosome. Its subcellular location is the secreted. In terms of biological role, may play an important role in the sperm/egg interaction; released during the acrosome reaction. The protein is Serine protease 40 (Prss40) of Mus musculus (Mouse).